A 211-amino-acid polypeptide reads, in one-letter code: Synaptosomal-associated protein 23 (211 aa).

At Met-1 the chain carries N-acetylmethionine. Residues Ser-5, Ser-6, Ser-20, Ser-23, and Ser-34 each carry the phosphoserine modification. The t-SNARE coiled-coil homology 1 domain maps to 14–76 (HQITDESLES…RETEKTLTEL (63 aa)). Positions 23–76 (STRRILGLAIESQDAGIKTITMLDEQKEQLNRIEEGLDQINKDMRETEKTLTEL) form a coiled coil. S-palmitoyl cysteine attachment occurs at residues Cys-79, Cys-80, Cys-83, Cys-85, and Cys-87. A Phosphoserine modification is found at Ser-110. A lipid anchor (S-palmitoyl cysteine) is attached at Cys-112. One can recognise a t-SNARE coiled-coil homology 2 domain in the interval 146–208 (DAREDEMEEN…DIANARAKKL (63 aa)). Ser-161 is subject to Phosphoserine.

It belongs to the SNAP-25 family. As to quaternary structure, homotetramer (via coiled-coil domain), also forms heterotetramers with STX4 and VAMP3. Found in a complex with VAMP8 and STX1A. Found in a complex with VAMP8 and STX4 in pancreas. Interacts simultaneously with SNAPIN and SYN4. Interacts with STX1A. Interacts with STX12. Interacts tightly to multiple syntaxins and synaptobrevins/VAMPs. Interacts with ZDHHC13 (via ANK repeats). Interacts with ZDHHC17 (via ANK repeats). As to expression, ubiquitous. Highest levels where found in placenta.

The protein resides in the cell membrane. It localises to the synapse. Its subcellular location is the synaptosome. In terms of biological role, essential component of the high affinity receptor for the general membrane fusion machinery and an important regulator of transport vesicle docking and fusion. The chain is Synaptosomal-associated protein 23 (SNAP23) from Homo sapiens (Human).